Consider the following 355-residue polypeptide: MASSSSNRQFSHRNVNTFLTYPHCPENPEIVCQMIWELVGRWTPKYIICAQEAHKDGDMHLHALLQTEKPVRITDSRFFDIEGFHPNIQSAKSVNKVRDYILKEPLAVFERGTFIPRKSSFQGNPSKGNSEKKPSKDEIMREIISHSTSKLEYLSMIRKEFPYDWATKLQYFEYSANKLFPEIQEEFISPHPPSSPDLLCNESIKDWLQPNIFQPTDEGTRKQSLYIVGPTRTGKSTWARSLGLHNYWQNNVDWSSYNEDAIYNIVDDIPFKFCPCWKQLVGCQKEFVVNPKYGKKKKVQMKSKPTIILANWDEDWMNEMTPGQLEYFEANCMIYKMSPGEKWYSPPVLPPTEEV.

In terms of domain architecture, CRESS-DNA virus Rep endonuclease spans 11-114 (SHRNVNTFLT…PLAVFERGTF (104 aa)). An RCR-1 motif is present at residues 18–21 (FLTY). A divalent metal cation-binding residues include glutamate 52, histidine 60, and histidine 62. An RCR-2 motif is present at residues 60-62 (HLH). Residue tyrosine 100 is the For DNA cleavage activity of the active site. The RCR-3 motif lies at 100–103 (YILK). Residue glutamate 104 coordinates a divalent metal cation. The segment covering 119 to 128 (SSFQGNPSKG) has biased composition (polar residues). Residues 119–138 (SSFQGNPSKGNSEKKPSKDE) form a disordered region. A compositionally biased stretch (basic and acidic residues) spans 129–138 (NSEKKPSKDE). The interval 175–187 (SANKLFPEIQEEF) is oligomerization. An ATP-binding site is contributed by 229–236 (GPTRTGKS). The transactivation stretch occupies residues 252 to 270 (VDWSSYNEDAIYNIVDDIP). The Nuclear localization signal motif lies at 292 to 303 (KYGKKKKVQMKS).

This sequence belongs to the geminiviridae Rep protein family. Homooligomer. Rep binds to repeated DNA motifs (iterons). Forms the O-complex, which is a Rep-DNA complex involved in the initiation of RCR. Part of the C- and V-complexes which are RepA-Rep-DNA complexes involved in the c-sense and v-sense transcription. It depends on Mg(2+) as a cofactor. The cofactor is Mn(2+).

It localises to the host nucleus. Its function is as follows. Essential for the replication of viral ssDNA. The closed circular ssDNA genome is first converted to a superhelical dsDNA. Rep binds a specific region at the genome origin of replication. It introduces an endonucleolytic nick within the conserved sequence 5'-TAATATTAC-3' in the intergenic region of the genome present in all geminiviruses, thereby initiating the rolling circle replication (RCR). Following cleavage, binds covalently to the 5'-phosphate of DNA as a tyrosyl ester. The cleavage gives rise to a free 3'-OH that serves as a primer for the cellular DNA polymerase. The polymerase synthesizes the (+) strand DNA by rolling circle mechanism. After one round of replication, a Rep-catalyzed nucleotidyl transfer reaction releases a circular single-stranded virus genome, thereby terminating the replication. Displays origin-specific DNA cleavage, nucleotidyl transferase, ATPase and helicase activities. Acts as an inhibitor of C-sense gene transcription. This is Replication-associated protein from Maize streak virus genotype B (isolate Tas) (MSV).